A 97-amino-acid chain; its full sequence is Citrate lyase acyl carrier protein (97 aa).

O-(phosphoribosyl dephospho-coenzyme A)serine is present on Ser-14.

The protein belongs to the CitD family. Oligomer with a subunit composition of (alpha,beta,gamma)6.

The protein localises to the cytoplasm. Covalent carrier of the coenzyme of citrate lyase. In Klebsiella pneumoniae subsp. pneumoniae (strain ATCC 700721 / MGH 78578), this protein is Citrate lyase acyl carrier protein.